A 221-amino-acid polypeptide reads, in one-letter code: Uracil-DNA glycosylase (221 aa).

The active-site Proton acceptor is Asp-64.

This sequence belongs to the uracil-DNA glycosylase (UDG) superfamily. UNG family.

The protein localises to the cytoplasm. The enzyme catalyses Hydrolyzes single-stranded DNA or mismatched double-stranded DNA and polynucleotides, releasing free uracil.. Functionally, excises uracil residues from the DNA which can arise as a result of misincorporation of dUMP residues by DNA polymerase or due to deamination of cytosine. This Mycoplasmopsis pulmonis (strain UAB CTIP) (Mycoplasma pulmonis) protein is Uracil-DNA glycosylase.